The sequence spans 260 residues: Imidazole glycerol phosphate synthase subunit HisF (260 aa).

Active-site residues include aspartate 11 and aspartate 130.

Belongs to the HisA/HisF family. As to quaternary structure, heterodimer of HisH and HisF.

The protein resides in the cytoplasm. The enzyme catalyses 5-[(5-phospho-1-deoxy-D-ribulos-1-ylimino)methylamino]-1-(5-phospho-beta-D-ribosyl)imidazole-4-carboxamide + L-glutamine = D-erythro-1-(imidazol-4-yl)glycerol 3-phosphate + 5-amino-1-(5-phospho-beta-D-ribosyl)imidazole-4-carboxamide + L-glutamate + H(+). It participates in amino-acid biosynthesis; L-histidine biosynthesis; L-histidine from 5-phospho-alpha-D-ribose 1-diphosphate: step 5/9. In terms of biological role, IGPS catalyzes the conversion of PRFAR and glutamine to IGP, AICAR and glutamate. The HisF subunit catalyzes the cyclization activity that produces IGP and AICAR from PRFAR using the ammonia provided by the HisH subunit. This is Imidazole glycerol phosphate synthase subunit HisF from Psychrobacter cryohalolentis (strain ATCC BAA-1226 / DSM 17306 / VKM B-2378 / K5).